Consider the following 232-residue polypeptide: MSPDTEEQTGLTIYLYPVIAWIILVTKIESGLRTRTFPVVHGDEGNNLIPLPEDVKNIRIVQSWPDTFLAKATVGAETIDMGIHVSPDVEALKKEAIELIKHKGSLRKAKKDAERESIVSGWFQSKFQSELLNLKKGWRIRGIVRAESPESKTLFNIELIKRVERRKDASHLRSGVFTPYQKSRIEDIPLSQRKIEPGEVDVPIPYDGIYRIAISPNVKTTYFVELFVEKGS.

The helical transmembrane segment at 10–32 threads the bilayer; the sequence is GLTIYLYPVIAWIILVTKIESGL.

The protein localises to the membrane. This is an uncharacterized protein from Archaeoglobus fulgidus (strain ATCC 49558 / DSM 4304 / JCM 9628 / NBRC 100126 / VC-16).